A 471-amino-acid polypeptide reads, in one-letter code: Coagulation factor IX (471 aa).

The first 28 residues, 1–28 (MKHLNTVMAESPALITIFLLGYLLSTEC), serve as a signal peptide directing secretion. A propeptide spanning residues 29 to 46 (AVFLDRENATKILTRPKR) is cleaved from the precursor. Tyr-47, Asn-48, Glu-53, Glu-54, Glu-61, Glu-63, Glu-66, Glu-67, Glu-72, Glu-73, and Glu-76 together coordinate Ca(2+). Positions 47-92 (YNSGKLEEFVRGNLERECIEERCSFEEAREVFENTEKTTEFWKQYV) constitute a Gla domain. 11 positions are modified to 4-carboxyglutamate: Glu-53, Glu-54, Glu-61, Glu-63, Glu-66, Glu-67, Glu-72, Glu-73, Glu-76, Glu-79, and Glu-82. Glu-61 serves as a coordination point for Mg(2+). A disulfide bond links Cys-64 and Cys-69. Glu-66 lines the Mg(2+) pocket. Glu-72 contacts Mg(2+). Glu-76 contributes to the Mg(2+) binding site. Glu-82 is a Ca(2+) binding site. Position 82 (Glu-82) interacts with Mg(2+). Thr-85 carries O-linked (GalNAc...) threonine glycosylation. Ca(2+) is bound by residues Glu-86, Asp-93, Gly-94, and Gln-96. Glu-86 is modified (4-carboxyglutamate). Glu-86 contributes to the Mg(2+) binding site. The region spanning 93-129 (DGDQCESNPCLNGGICKDDISSYECWCQVGFEGRNCE) is the EGF-like 1; calcium-binding domain. Cystine bridges form between Cys-97/Cys-108, Cys-102/Cys-117, Cys-119/Cys-128, Cys-134/Cys-145, Cys-141/Cys-155, Cys-157/Cys-170, Cys-178/Cys-345, Cys-262/Cys-278, Cys-392/Cys-406, and Cys-417/Cys-445. Ser-99 is a glycosylation site (O-linked (Glc...) serine). Residues Asp-110 and Asp-111 each contribute to the Ca(2+) site. Asp-110 bears the (3R)-3-hydroxyaspartate mark. Ser-114 bears the Phosphoserine mark. In terms of domain architecture, EGF-like 2 spans 130 to 171 (LDATCNIKNGRCKQFCKNSPDNKVICSCTEGYQLAEDQKSCE). A propeptide spans 193 to 236 (AETVFSNMDYENSTEAVFIQDDITDGAILNNVTESSESLNDFTR) (activation peptide). Tyr-202 is subject to Sulfotyrosine. N-linked (GlcNAc...) asparagine glycosylation is present at Asn-204. Position 205 is a phosphoserine (Ser-205). At Thr-206 the chain carries Phosphothreonine; alternate. Thr-206 carries O-linked (GalNAc...) threonine; alternate glycosylation. Residue Asn-223 is glycosylated (N-linked (GlcNAc...) asparagine). 2 O-linked (GalNAc...) threonine glycosylation sites follow: Thr-225 and Thr-235. In terms of domain architecture, Peptidase S1 spans 237–469 (VVGGENAKPG…YVNWIKEKTK (233 aa)). His-277 serves as the catalytic Charge relay system. Residues Glu-291, Asn-293, Glu-298, and Glu-301 each coordinate Ca(2+). The active-site Charge relay system is the Asp-325. Catalysis depends on Ser-421, which acts as the Charge relay system.

The protein belongs to the peptidase S1 family. As to quaternary structure, heterodimer of a light chain and a heavy chain; disulfide-linked. Interacts (inactive and activated) with F11 (activated) in calcium-dependent manner. Interacts with SERPINC1. Activated by factor XIa, which excises the activation peptide. The propeptide can also be removed by snake venom protease. Activated by coagulation factor VIIa-tissue factor (F7-F3) complex in calcium-dependent manner. Post-translationally, the iron and 2-oxoglutarate dependent 3-hydroxylation of aspartate and asparagine is (R) stereospecific within EGF domains. In terms of processing, predominantly O-glucosylated at Ser-99 by POGLUT1 in vitro. Detected in liver.

Its subcellular location is the secreted. The enzyme catalyses Selective cleavage of Arg-|-Ile bond in factor X to form factor Xa.. Factor IX is a vitamin K-dependent plasma protein that participates in the intrinsic pathway of blood coagulation by converting factor X to its active form in the presence of Ca(2+) ions, phospholipids, and factor VIIIa. The protein is Coagulation factor IX (F9) of Mus musculus (Mouse).